The primary structure comprises 118 residues: Basic phospholipase A2 PA-15 (118 aa).

Intrachain disulfides connect Cys-11–Cys-71, Cys-27–Cys-117, Cys-29–Cys-45, Cys-44–Cys-98, Cys-51–Cys-91, Cys-60–Cys-84, and Cys-78–Cys-89. Residues Tyr-28, Gly-30, and Gly-32 each contribute to the Ca(2+) site. His-48 is a catalytic residue. Ca(2+) is bound at residue Asp-49. Asp-92 is a catalytic residue.

The protein belongs to the phospholipase A2 family. Group I subfamily. D49 sub-subfamily. It depends on Ca(2+) as a cofactor. In terms of tissue distribution, expressed by the venom gland.

Its subcellular location is the secreted. It catalyses the reaction a 1,2-diacyl-sn-glycero-3-phosphocholine + H2O = a 1-acyl-sn-glycero-3-phosphocholine + a fatty acid + H(+). In terms of biological role, PLA2 catalyzes the calcium-dependent hydrolysis of the 2-acyl groups in 3-sn-phosphoglycerides. The sequence is that of Basic phospholipase A2 PA-15 from Pseudechis australis (Mulga snake).